The sequence spans 556 residues: MKSDIEIAQSANMKKIADIAKELGLGEDDIELYGKYKCKISLDVLKNKHNEADGKLILVTAINPTPAGEGKSTITVGLGQALCKLHKKAVIALREPSLGPVFGIKGGAAGGGYSQVVPMEDINLHFTGDMHAITSANNLLAAAIDNHIHQGNTLKIDSRRILFKRVMDMNDRALRHIVVGMGGKVNGFLREDGFTITVASEIMAILCLSNSLMDLKERFGNILVAYNLDGEPIYCKDLNVHGAMAMLMKDAIKPNLVQTLENTPAIIHGGPFANIAHGCNSILATKMAMKLGDYAITEAGFGADLGAEKFLDIKCRYGNLKPDCIVVVATIRALKHHGGVSKDELSTPDIEALSKGVSNLQKQIENMKKYGVPVVVAINKFITDSDEEVEFIKEFCDKQGVEVALAEVWEKGGEGGIALAEKVINVLDTQKSNFKCLYDEKLSIKEKMDIIAREIYGASGVDYDKSAEKDIKDIEKLGLDKLPICVAKTQYSLSDNPSLLGKPEDFRVNVREVKVSNGAGFIVVLTGNIMTMPGLPKVPAANKMDILEGGTIQGLF.

65–72 (TPAGEGKS) serves as a coordination point for ATP.

It belongs to the formate--tetrahydrofolate ligase family.

The catalysed reaction is (6S)-5,6,7,8-tetrahydrofolate + formate + ATP = (6R)-10-formyltetrahydrofolate + ADP + phosphate. The protein operates within one-carbon metabolism; tetrahydrofolate interconversion. The protein is Formate--tetrahydrofolate ligase of Clostridium novyi (strain NT).